The sequence spans 319 residues: Acetyl-coenzyme A carboxylase carboxyl transferase subunit alpha (319 aa).

Residues 35–296 form the CoA carboxyltransferase C-terminal domain; that stretch reads DLDKELEQLE…KATLLRQLAD (262 aa).

This sequence belongs to the AccA family. As to quaternary structure, acetyl-CoA carboxylase is a heterohexamer composed of biotin carboxyl carrier protein (AccB), biotin carboxylase (AccC) and two subunits each of ACCase subunit alpha (AccA) and ACCase subunit beta (AccD).

The protein localises to the cytoplasm. The enzyme catalyses N(6)-carboxybiotinyl-L-lysyl-[protein] + acetyl-CoA = N(6)-biotinyl-L-lysyl-[protein] + malonyl-CoA. It participates in lipid metabolism; malonyl-CoA biosynthesis; malonyl-CoA from acetyl-CoA: step 1/1. Component of the acetyl coenzyme A carboxylase (ACC) complex. First, biotin carboxylase catalyzes the carboxylation of biotin on its carrier protein (BCCP) and then the CO(2) group is transferred by the carboxyltransferase to acetyl-CoA to form malonyl-CoA. This Vibrio cholerae serotype O1 (strain ATCC 39541 / Classical Ogawa 395 / O395) protein is Acetyl-coenzyme A carboxylase carboxyl transferase subunit alpha.